A 197-amino-acid chain; its full sequence is MSVCLAITKGIAVSSIGLYSGLLASASLITSTTPLEVLTGSLTPTLTTLKNAATALGAFASTFFCVSFFGAPPSLRHPYLLYGMLVAPLSSFVLGCASNYQSRKYSKVSKESSLFPEDSKLAASELSDSIIDLGEDNHASENTPRDGKPAATTVSKPAEALHTGPPIHTKNLIAATAIAIVGFVQAVIGVYGEGQFI.

The next 3 helical transmembrane spans lie at 10–30 (GIAV…SLIT), 52–72 (AATA…FGAP), and 78–98 (PYLL…GCAS). 2 positions are modified to phosphoserine: Ser-127 and Ser-129. Over residues 135-148 (EDNHASENTPRDGK) the composition is skewed to basic and acidic residues. Positions 135–154 (EDNHASENTPRDGKPAATTV) are disordered. The helical transmembrane segment at 172–192 (LIAATAIAIVGFVQAVIGVYG) threads the bilayer.

Belongs to the ATG33 family.

It is found in the mitochondrion membrane. Its function is as follows. Involved in the selective degradation of mitochondria via autophagy during starvation and at post-log phase. This Saccharomyces cerevisiae (strain ATCC 204508 / S288c) (Baker's yeast) protein is Autophagy-related protein 33 (ATG33).